Consider the following 95-residue polypeptide: Small ribosomal subunit protein bS6 (95 aa).

It belongs to the bacterial ribosomal protein bS6 family.

In terms of biological role, binds together with bS18 to 16S ribosomal RNA. The chain is Small ribosomal subunit protein bS6 from Corynebacterium urealyticum (strain ATCC 43042 / DSM 7109).